A 308-amino-acid polypeptide reads, in one-letter code: Ornithine carbamoyltransferase (308 aa).

Carbamoyl phosphate-binding positions include 52 to 55 (STRT), Q79, R103, and 130 to 133 (HPLQ). L-ornithine is bound by residues N162, D224, and 228–229 (SM). Carbamoyl phosphate-binding positions include 264-265 (CL) and R292.

This sequence belongs to the aspartate/ornithine carbamoyltransferase superfamily. OTCase family.

The protein resides in the cytoplasm. It catalyses the reaction carbamoyl phosphate + L-ornithine = L-citrulline + phosphate + H(+). Its pathway is amino-acid biosynthesis; L-arginine biosynthesis; L-arginine from L-ornithine and carbamoyl phosphate: step 1/3. Functionally, reversibly catalyzes the transfer of the carbamoyl group from carbamoyl phosphate (CP) to the N(epsilon) atom of ornithine (ORN) to produce L-citrulline. In Pyrobaculum calidifontis (strain DSM 21063 / JCM 11548 / VA1), this protein is Ornithine carbamoyltransferase.